The primary structure comprises 754 residues: MLPGCIFLMILLIPQVKEKFILGVEGQQLVRPKKLPLIQKRDTGHTHDDDILKTYEEELLYEIKLNRKTLVLHLLRSREFLGSNYSETFYSMKGEAFTRHPQIMDHCFYQGSIVHEYDSAASISTCNGLRGFFRINDQRYLIEPVKYSDEGEHLVFKYNLRVPYGANYSCTELNFTRKTVPGDNESEEDSKIKGIHDEKYVELFIVADDTVYRRNGHPHNKLRNRIWGMVNFVNMIYKTLNIHVTLVGIEIWTHEDKIELYSNIETTLLRFSFWQEKILKTRKDFDHVVLLSGKWLYSHVQGISYPGGMCLPYYSTSIIKDLLPDTNIIANRMAHQLGHNLGMQHDEFPCTCPSGKCVMDSDGSIPALKFSKCSQNQYHQYLKDYKPTCMLNIPFPYNFHDFQFCGNKKLDEGEECDCGPAQECTNPCCDAHTCVLKPGFTCAEGECCESCQIKKAGSICRPAKDECDFPEMCTGHSPACPKDQFRVNGFPCKNSEGYCFMGKCPTREDQCSELFDDEAIESHDICYKMNTKGNKFGYCKNKENRFLPCEEKDVRCGKIYCTGGELSSLLGEDKTYHLKDPQKNATVKCKTIFLYHDSTDIGLVASGTKCGEGMVCNNGECLNMEKVYISTNCPSQCNENPVDGHGLQCHCEEGQAPVACEETLHVTNITILVVVLVLVIVGIGVLILLVRYRKCIKLKQVQSPPTETLGVENKGYFGDEQQIRTEPILPEIHFLNKPASKDSRGIADPNQSAK.

An N-terminal signal peptide occupies residues 1 to 18; that stretch reads MLPGCIFLMILLIPQVKE. A propeptide spanning residues 19 to 176 is cleaved from the precursor; sequence KFILGVEGQQ…NYSCTELNFT (158 aa). The Extracellular portion of the chain corresponds to 19–668; that stretch reads KFILGVEGQQ…ACEETLHVTN (650 aa). N-linked (GlcNAc...) asparagine glycosylation is found at N84, N167, N174, and N184. In terms of domain architecture, Peptidase M12B spans 199–394; that stretch reads KYVELFIVAD…YKPTCMLNIP (196 aa). 4 cysteine pairs are disulfide-bonded: C310–C389, C350–C373, C352–C357, and C460–C480. Residues 402–488 form the Disintegrin domain; the sequence is FQFCGNKKLD…ACPKDQFRVN (87 aa). 2 N-linked (GlcNAc...) asparagine glycosylation sites follow: N584 and N668. A helical membrane pass occupies residues 669-689; it reads ITILVVVLVLVIVGIGVLILL. The Cytoplasmic portion of the chain corresponds to 690 to 754; sequence VRYRKCIKLK…GIADPNQSAK (65 aa).

Interacts with ITM2B in sperm; the interaction increases following capacitation. Interacts with HSPA5 and CANX.

The protein localises to the membrane. Required for normal male fertility via maintenance of epithelial cell morphology in the caput epididymis and subsequently correct epididymis lumen structure required for sperm development. Plays a role in sperm motility, flagella morphology and tyrosine phosphorylation during sperm capacitance. Plays a role in normal expression levels of HSPA5, ITM2B and ADAM2 in sperm both prior to and post-capacitation. This is a non catalytic metalloprotease-like protein. This is Disintegrin and metalloproteinase domain-containing protein 7 from Homo sapiens (Human).